Reading from the N-terminus, the 158-residue chain is Low molecular weight phosphotyrosine protein phosphatase (158 aa).

Residue alanine 2 is modified to N-acetylalanine. Cysteine 13 functions as the Nucleophile in the catalytic mechanism. Residue arginine 19 is part of the active site. Residue aspartate 130 is the Proton donor of the active site. Phosphotyrosine occurs at positions 132 and 133.

It belongs to the low molecular weight phosphotyrosine protein phosphatase family.

It is found in the cytoplasm. It catalyses the reaction O-phospho-L-tyrosyl-[protein] + H2O = L-tyrosyl-[protein] + phosphate. It carries out the reaction a phosphate monoester + H2O = an alcohol + phosphate. Acts on tyrosine phosphorylated proteins, low-MW aryl phosphates and natural and synthetic acyl phosphates. This chain is Low molecular weight phosphotyrosine protein phosphatase (ACP1), found in Gallus gallus (Chicken).